A 1434-amino-acid polypeptide reads, in one-letter code: DNA-directed RNA polymerase subunit beta (1434 aa).

The protein belongs to the RNA polymerase beta chain family. As to quaternary structure, the RNAP catalytic core consists of 2 alpha, 1 beta, 1 beta' and 1 omega subunit. When a sigma factor is associated with the core the holoenzyme is formed, which can initiate transcription.

It carries out the reaction RNA(n) + a ribonucleoside 5'-triphosphate = RNA(n+1) + diphosphate. Functionally, DNA-dependent RNA polymerase catalyzes the transcription of DNA into RNA using the four ribonucleoside triphosphates as substrates. The sequence is that of DNA-directed RNA polymerase subunit beta from Ureaplasma parvum serovar 3 (strain ATCC 27815 / 27 / NCTC 11736).